The sequence spans 397 residues: Cysteine desulfurase (397 aa).

Residues Asn-148, Gln-176, and 196-198 (SAH) each bind pyridoxal 5'-phosphate. Lys-199 carries the N6-(pyridoxal phosphate)lysine modification. Thr-234 is a pyridoxal 5'-phosphate binding site. Cys-321 (cysteine persulfide intermediate) is an active-site residue. A [2Fe-2S] cluster-binding site is contributed by Cys-321.

The protein belongs to the class-V pyridoxal-phosphate-dependent aminotransferase family. NifS/IscS subfamily. As to quaternary structure, homodimer. Requires pyridoxal 5'-phosphate as cofactor.

It catalyses the reaction (sulfur carrier)-H + L-cysteine = (sulfur carrier)-SH + L-alanine. In terms of biological role, catalyzes the removal of elemental sulfur atoms from cysteine to produce alanine. Seems to participate in the biosynthesis of the nitrogenase metalloclusters by providing the inorganic sulfur required for the Fe-S core formation. The protein is Cysteine desulfurase of Klebsiella pneumoniae.